The chain runs to 352 residues: Photosystem II D2 protein (352 aa).

Residues 40-60 (CAYLALGGWLTGTTFVTSWYT) traverse the membrane as a helical segment. Residue His117 participates in chlorophyll a binding. A helical membrane pass occupies residues 124–140 (GFMLRQFEIARLVGVRP). Residues Gln129 and Asn142 each contribute to the pheophytin a site. Residues 152-165 (VFVSVFLIYPLGQS) form a helical membrane-spanning segment. His197 is a binding site for chlorophyll a. A helical transmembrane segment spans residues 207–227 (GALLCAIHGATVENTLYKDGE). 2 residues coordinate a plastoquinone: His214 and Phe261. His214 is a binding site for Fe cation. Fe cation is bound at residue His268. The helical transmembrane segment at 278–294 (GLWMSSIGVVGLALNLR) threads the bilayer.

This sequence belongs to the reaction center PufL/M/PsbA/D family. In terms of assembly, PSII is composed of 1 copy each of membrane proteins PsbA, PsbB, PsbC, PsbD, PsbE, PsbF, PsbH, PsbI, PsbJ, PsbK, PsbL, PsbM, PsbT, PsbX, PsbY, PsbZ, Psb30/Ycf12, peripheral proteins PsbO, CyanoQ (PsbQ), PsbU, PsbV and a large number of cofactors. It forms dimeric complexes. The cofactor is The D1/D2 heterodimer binds P680, chlorophylls that are the primary electron donor of PSII, and subsequent electron acceptors. It shares a non-heme iron and each subunit binds pheophytin, quinone, additional chlorophylls, carotenoids and lipids. There is also a Cl(-1) ion associated with D1 and D2, which is required for oxygen evolution. The PSII complex binds additional chlorophylls, carotenoids and specific lipids..

It localises to the cellular thylakoid membrane. The catalysed reaction is 2 a plastoquinone + 4 hnu + 2 H2O = 2 a plastoquinol + O2. Functionally, photosystem II (PSII) is a light-driven water:plastoquinone oxidoreductase that uses light energy to abstract electrons from H(2)O, generating O(2) and a proton gradient subsequently used for ATP formation. It consists of a core antenna complex that captures photons, and an electron transfer chain that converts photonic excitation into a charge separation. The D1/D2 (PsbA/PsbD) reaction center heterodimer binds P680, the primary electron donor of PSII as well as several subsequent electron acceptors. D2 is needed for assembly of a stable PSII complex. The polypeptide is Photosystem II D2 protein (Synechococcus sp. (strain JA-3-3Ab) (Cyanobacteria bacterium Yellowstone A-Prime)).